The sequence spans 518 residues: Probable triacylglyceride transporter BCG_1471c (518 aa).

14 helical membrane-spanning segments follow: residues Val-7 to Val-27, Arg-46 to Gly-66, Leu-76 to Gly-96, Ile-110 to Trp-130, Ala-144 to Leu-164, Val-170 to Pro-190, Val-201 to Tyr-221, Val-230 to Phe-250, Pro-270 to Val-290, Ala-308 to Ile-328, Val-337 to Val-357, Leu-379 to Val-401, Ile-408 to Leu-428, and Ile-475 to Gly-495.

The protein belongs to the major facilitator superfamily.

It is found in the cell inner membrane. Its activity is regulated as follows. Inhibited by CCCP and valinomycin. Its function is as follows. In association with lipoprotein LprG probably transports triacylglycerides (TAG) across the inner cell membrane into the periplasm; TAG probably regulates lipid metabolism and growth regulation. Confers resistance to several drugs such as rifampicin, clofazimine and novobiocin; is also part of the oxidative stress response and is needed to maintain normal growth characteristics. Probably an efflux transporter, involved in maintaining correct cell wall permeability. Probably required with LprG for normal surface localization of lipoarabinomannan (LAM). Required for optimal growth on cholesterol. In Mycobacterium bovis (strain BCG / Pasteur 1173P2), this protein is Probable triacylglyceride transporter BCG_1471c.